The primary structure comprises 27 residues: Potassium channel toxin alpha-KTx 32.1 (27 aa).

2 disulfides stabilise this stretch: Cys-5-Cys-18 and Cys-12-Cys-25.

Expressed by the venom gland.

It localises to the secreted. In terms of biological role, blocker of voltage-gated potassium channels. Inhibits voltage-gated potassium channels Kv1.2/KCNA2 (Kd=0.96 nM) and Kv1.3/KCNA3 (Kd=1.3 nM). Does not inhibit Kv1.1/KCNA1, Kv1.5/KCNA5, Kv11.1/KCNH2/ERG1, KCa1.1/KCNMA1, KCa3.1/KCNN4, NaV1.5/SCN5A, NaV1.4/SCN4A or HV1/HVCN1. Strongly inhibits the expression of the activation markers interleukin-2 receptor and CD40 ligand/CD40LG in anti-CD3-activated CD4(+) TEM lymphocytes. This chain is Potassium channel toxin alpha-KTx 32.1, found in Centruroides margaritatus (Central American bark Scorpion).